We begin with the raw amino-acid sequence, 578 residues long: PTS system fructose-specific EIIB'BC component (578 aa).

2 consecutive PTS EIIB type-2 domains span residues 1–99 and 119–214; these read MSKI…EALA and VVAI…AALA. Catalysis depends on Cys-125, which acts as the Phosphocysteine intermediate; for EIIB activity. The residue at position 125 (Cys-125) is a Phosphocysteine; by EIIA. Residues 241–576 enclose the PTS EIIC type-2 domain; sequence PYMHLLTGVS…KKPIPAEERA (336 aa). The next 9 membrane-spanning stretches (helical) occupy residues 251–271, 284–304, 319–339, 364–384, 405–425, 428–450, 477–497, 518–538, and 545–565; these read YMLP…VFGI, LMAI…AGFI, IGGM…VAGF, VLIL…YVVG, NAVV…GGPI, AAYT…AVMA, AGGA…IPFA, LSMA…VLAI, and LGLY…LLIA.

It is found in the cell inner membrane. The catalysed reaction is D-fructose(out) + N(pros)-phospho-L-histidyl-[protein] = D-fructose 1-phosphate(in) + L-histidyl-[protein]. Its function is as follows. The phosphoenolpyruvate-dependent sugar phosphotransferase system (sugar PTS), a major carbohydrate active transport system, catalyzes the phosphorylation of incoming sugar substrates concomitantly with their translocation across the cell membrane. The enzyme II FruAB PTS system is involved in fructose transport. The sequence is that of PTS system fructose-specific EIIB'BC component from Rhodobacter capsulatus (Rhodopseudomonas capsulata).